A 442-amino-acid chain; its full sequence is Transcription factor AP-2-epsilon (442 aa).

Positions 54–59 match the PPxY motif motif; it reads YFPPPY. The residue at position 246 (S246) is a Phosphoserine; by PKA. The segment at 287–417 is H-S-H (helix-span-helix), dimerization; the sequence is RRKAANVTLL…YLLESLKGLD (131 aa).

Belongs to the AP-2 family. Binds DNA as a dimer. Can form homodimers or heterodimers with other AP-2 family members. As to expression, expressed in skin, primary keratinocytes, immortalized keratinocytes, and HeLa cell line.

It is found in the nucleus. Sequence-specific DNA-binding protein that interacts with inducible viral and cellular enhancer elements to regulate transcription of selected genes. AP-2 factors bind to the consensus sequence 5'-GCCNNNGGC-3' and activate genes involved in a large spectrum of important biological functions including proper eye, face, body wall, limb and neural tube development. They also suppress a number of genes including MCAM/MUC18, C/EBP alpha and MYC. AP-2-epsilon may play a role in the development of the CNS and in cartilage differentiation. The sequence is that of Transcription factor AP-2-epsilon from Homo sapiens (Human).